The sequence spans 496 residues: Glycylpeptide N-tetradecanoyltransferase 1 (496 aa).

The tract at residues 1–82 (MADESETAVK…SAQDQPVKMN (82 aa)) is disordered. Phosphoserine occurs at positions 31 and 47. The span at 55 to 66 (KKKKKKQKKKKE) shows a compositional bias: basic residues. A Phosphoserine modification is found at serine 83. Residues glutamine 118, phenylalanine 119, tryptophan 120, phenylalanine 247, leucine 248, cysteine 249, valine 250, serine 256, arginine 258, valine 259, and alanine 260 each contribute to the tetradecanoyl-CoA site.

The protein belongs to the NMT family.

The protein resides in the cytoplasm. It is found in the cytosol. The protein localises to the membrane. The catalysed reaction is N-terminal glycyl-[protein] + tetradecanoyl-CoA = N-tetradecanoylglycyl-[protein] + CoA + H(+). The enzyme catalyses N-terminal glycyl-L-lysyl-[protein] + tetradecanoyl-CoA = N-terminal glycyl-(N(6)-tetradecanoyl)-L-lysyl-[protein] + CoA + H(+). Functionally, adds a myristoyl group to the N-terminal glycine residue of certain cellular and viral proteins. Also able to mediate N-terminal lysine myristoylation of proteins: catalyzes myristoylation of ARF6 on both 'Gly-2' and 'Lys-3'. Lysine myristoylation is required to maintain ARF6 on membranes during the GTPase cycle. In Pongo abelii (Sumatran orangutan), this protein is Glycylpeptide N-tetradecanoyltransferase 1 (NMT1).